The primary structure comprises 415 residues: Serine hydroxymethyltransferase 1 (415 aa).

(6S)-5,6,7,8-tetrahydrofolate is bound by residues leucine 117 and 121-123 (GHL). Lysine 225 carries the post-translational modification N6-(pyridoxal phosphate)lysine. 349–351 (SPF) lines the (6S)-5,6,7,8-tetrahydrofolate pocket.

Belongs to the SHMT family. Homodimer. The cofactor is pyridoxal 5'-phosphate.

It localises to the cytoplasm. The enzyme catalyses (6R)-5,10-methylene-5,6,7,8-tetrahydrofolate + glycine + H2O = (6S)-5,6,7,8-tetrahydrofolate + L-serine. The protein operates within one-carbon metabolism; tetrahydrofolate interconversion. Its pathway is amino-acid biosynthesis; glycine biosynthesis; glycine from L-serine: step 1/1. In terms of biological role, catalyzes the reversible interconversion of serine and glycine with tetrahydrofolate (THF) serving as the one-carbon carrier. This reaction serves as the major source of one-carbon groups required for the biosynthesis of purines, thymidylate, methionine, and other important biomolecules. Also exhibits THF-independent aldolase activity toward beta-hydroxyamino acids, producing glycine and aldehydes, via a retro-aldol mechanism. This chain is Serine hydroxymethyltransferase 1, found in Sulfurimonas denitrificans (strain ATCC 33889 / DSM 1251) (Thiomicrospira denitrificans (strain ATCC 33889 / DSM 1251)).